The primary structure comprises 83 residues: Small ribosomal subunit protein bS16 (83 aa).

Belongs to the bacterial ribosomal protein bS16 family.

The polypeptide is Small ribosomal subunit protein bS16 (Shewanella woodyi (strain ATCC 51908 / MS32)).